The primary structure comprises 296 residues: MNRQSGVNAGVQNNPPSRVVYLGSIPYDQTEEQILDLCSNVGPVINLKMMFDPQTGRSKGYAFIEFRDLESSASAVRNLNGYQLGSRFLKCGYSSNSDISGVSQQQQQQYNNINGNNNNNGNNNNNSNGPDFQNSGNANFLSQKFPELPSGIDVNINMTTPAMMISSELAKKPKEVQLKFLQKFQEWTRAHPEDAVSLLELCPQLSFVTAELLLTNGICKVDDLIPLASRPQEEASATNNNSVNEVVDPAVLNKQKELLKQVLQLNDSQISILPDDERMAIWDLKQKALRGEFGAF.

One can recognise an RRM domain in the interval 18 to 96 (RVVYLGSIPY…RFLKCGYSSN (79 aa)). The segment at 99–140 (ISGVSQQQQQQYNNINGNNNNNGNNNNNSNGPDFQNSGNANF) is disordered. Positions 100–135 (SGVSQQQQQQYNNINGNNNNNGNNNNNSNGPDFQNS) are enriched in low complexity.

As to quaternary structure, component of the CFIA complex, which is composed of RNA14, RNA15, PCF11 and CLP1. Interacts directly with RNA14. Interacts with polyadenylate-binding protein PAB1.

The protein localises to the nucleus. In terms of biological role, RNA-binding component of the cleavage factor IA (CFIA) complex, which is involved in the endonucleolytic cleavage during polyadenylation-dependent pre-mRNA 3'-end formation and cooperates with the cleavage factor NAB4/CFIB and the cleavage and polyadenylation factor (CPF) complex. Binds to A-rich RNA sequence elements. This chain is mRNA 3'-end-processing protein RNA15 (RNA15), found in Saccharomyces cerevisiae (strain ATCC 204508 / S288c) (Baker's yeast).